A 314-amino-acid polypeptide reads, in one-letter code: Ribosomal RNA small subunit methyltransferase H (314 aa).

S-adenosyl-L-methionine is bound by residues 36–38 (GGH), aspartate 56, phenylalanine 80, aspartate 102, and glutamine 109. The disordered stretch occupies residues 278-300 (GGRSLKSIGKMKPSEEEVADNPR). The span at 289–300 (KPSEEEVADNPR) shows a compositional bias: basic and acidic residues.

It belongs to the methyltransferase superfamily. RsmH family.

The protein localises to the cytoplasm. It catalyses the reaction cytidine(1402) in 16S rRNA + S-adenosyl-L-methionine = N(4)-methylcytidine(1402) in 16S rRNA + S-adenosyl-L-homocysteine + H(+). Its function is as follows. Specifically methylates the N4 position of cytidine in position 1402 (C1402) of 16S rRNA. This chain is Ribosomal RNA small subunit methyltransferase H, found in Photorhabdus laumondii subsp. laumondii (strain DSM 15139 / CIP 105565 / TT01) (Photorhabdus luminescens subsp. laumondii).